The chain runs to 114 residues: Ig heavy chain V-A2 region BS-1 (114 aa).

Gln1 is subject to Pyrrolidone carboxylic acid. The Ig-like domain maps to 1–107; the sequence is QSVKESEGGL…YLGLMDVWGP (107 aa).

In Oryctolagus cuniculus (Rabbit), this protein is Ig heavy chain V-A2 region BS-1.